Reading from the N-terminus, the 497-residue chain is Serine/threonine-protein kinase 3 (497 aa).

Position 1 is an N-acetylmethionine (methionine 1). The segment at 1–20 (MEQPPASKSKLKKLSEDSLT) is disordered. Serine 15 carries the phosphoserine modification. Positions 27–278 (FDVLEKLGEG…ATQLLQHPFI (252 aa)) constitute a Protein kinase domain. ATP contacts are provided by residues 33-41 (LGEGSYGSV) and lysine 56. Threonine 117 is modified (phosphothreonine; by PKB/AKT1). Aspartate 146 acts as the Proton acceptor in catalysis. Mg(2+)-binding residues include asparagine 151 and aspartate 164. The residue at position 180 (threonine 180) is a Phosphothreonine; by autocatalysis. Residues 287 to 328 (LRDLIAEAMEIKAKRHEEQQRELEEEEENSDEDELDSHTMVK) are a coiled coil. Disordered regions lie at residues 301–343 (RHEE…TSTM) and 368–394 (NSEE…SPQV). The segment covering 309-321 (LEEEEENSDEDEL) has biased composition (acidic residues). Residue serine 316 is modified to Phosphoserine. Residues 326–343 (MVKTSSESVGTMRATSTM) show a composition bias toward polar residues. Threonine 336 carries the phosphothreonine modification. Residues 366–387 (VINSEEEEEEEEEEEEDGTMKR) are a coiled coil. The span at 369–382 (SEEEEEEEEEEEED) shows a compositional bias: acidic residues. Threonine 384 is modified (phosphothreonine). At threonine 390 the chain carries Phosphothreonine; by PKB/AKT1. Residues serine 391 and serine 450 each carry the phosphoserine modification. The 48-residue stretch at 443–490 (FDFLKNLSLEELQMRLKALDPMMEREIEELHQRYSAKRQPILDAMDAK) folds into the SARAH domain. The stretch at 448 to 479 (NLSLEELQMRLKALDPMMEREIEELHQRYSAK) forms a coiled coil.

This sequence belongs to the protein kinase superfamily. STE Ser/Thr protein kinase family. STE20 subfamily. As to quaternary structure, homodimer; mediated via the coiled-coil region. Interacts with NORE1, which inhibits autoactivation. Interacts with and stabilizes SAV1. Interacts with RAF1, which prevents dimerization and phosphorylation. Interacts with RASSF1. Interacts (via SARAH domain) with isoform 1 of NEK2. Interacts with ESR1 only in the presence of SAV1. Interacts with PKB/AKT1. Forms a tripartite complex with MOBKL1B and STK38. Interacts with RASSF2 (via SARAH domain). Interacts with DLG5 (via PDZ domain 3). Interacts with LATS1; this interaction is inhibited in the presence of DLG5. Interacts with MARK3 in the presence of DLG5. Interacts with RASSF5; this interaction inhibits STK3 autoactivation through heterodimerization. Interacts (when phosphorylated) with SLMAP (via FHA domain); the interaction associates STK3 with the STRIPAK complex. Mg(2+) is required as a cofactor. Autophosphorylated on two residues Thr-174 and Thr-180, leading to activation. Phosphorylation at Thr-117 and Thr-390 by PKB/AKT1, leads to inhibition of its: cleavage, kinase activity, autophosphorylation at Thr-180, binding to RASSF1 and nuclear translocation, and increase in its binding to RAF1. Phosphorylated at Ser-15 by PLK1, leading to activation. In terms of processing, proteolytically cleaved by caspase-3 during apoptosis. Proteolytic cleavage results in kinase activation and nuclear translocation of the truncated form (MST1/N). Post-translationally, ubiquitinated by TRIM69; leading to its redistribution to the perinuclear cytoskeleton.

It is found in the cytoplasm. The protein resides in the nucleus. The enzyme catalyses L-seryl-[protein] + ATP = O-phospho-L-seryl-[protein] + ADP + H(+). The catalysed reaction is L-threonyl-[protein] + ATP = O-phospho-L-threonyl-[protein] + ADP + H(+). Its activity is regulated as follows. Inhibited by the C-terminal non-catalytic region. Activated by caspase-cleavage. Full activation also requires homodimerization and autophosphorylation of Thr-180, which are inhibited by the proto-oncogene product RAF1. Activated by RASSF1 which acts by preventing its dephosphorylation. When autophosphorylated at Thr-180, recruits STRIPAK complex and promotes PP2A-mediated dephosphorylation and inactivation of STK3. Functionally, stress-activated, pro-apoptotic kinase which, following caspase-cleavage, enters the nucleus and induces chromatin condensation followed by internucleosomal DNA fragmentation. Key component of the Hippo signaling pathway which plays a pivotal role in organ size control and tumor suppression by restricting proliferation and promoting apoptosis. The core of this pathway is composed of a kinase cascade wherein STK3/MST2 and STK4/MST1, in complex with its regulatory protein SAV1, phosphorylates and activates LATS1/2 in complex with its regulatory protein MOB1, which in turn phosphorylates and inactivates YAP1 oncoprotein and WWTR1/TAZ. Phosphorylation of YAP1 by LATS2 inhibits its translocation into the nucleus to regulate cellular genes important for cell proliferation, cell death, and cell migration. STK3/MST2 and STK4/MST1 are required to repress proliferation of mature hepatocytes, to prevent activation of facultative adult liver stem cells (oval cells), and to inhibit tumor formation. Phosphorylates NKX2-1. Phosphorylates NEK2 and plays a role in centrosome disjunction by regulating the localization of NEK2 to centrosomes, and its ability to phosphorylate CROCC and CEP250. In conjunction with SAV1, activates the transcriptional activity of ESR1 through the modulation of its phosphorylation. Positively regulates RAF1 activation via suppression of the inhibitory phosphorylation of RAF1 on 'Ser-259'. Phosphorylates MOBKL1A and RASSF2. Phosphorylates MOBKL1B on 'Thr-74'. Acts cooperatively with MOBKL1B to activate STK38. The protein is Serine/threonine-protein kinase 3 (Stk3) of Mus musculus (Mouse).